The primary structure comprises 302 residues: Probable E3 ubiquitin-protein ligase RZFP34 (302 aa).

A CHY-type zinc finger spans residues 54–130; that stretch reads EGIMQYGCAH…VRQVCISCGV (77 aa). Positions 61, 63, 74, 75, 81, 84, 85, 100, 112, 115, 125, 128, 137, 140, 153, 154, 157, 160, 170, 171, 174, 177, 186, and 188 each coordinate Zn(2+). The CTCHY-type zinc finger occupies 132-196; sequence MGKYFCEVCK…ACVEGAMHHD (65 aa). Residues 197-240 form an RING-type; atypical zinc finger; the sequence is CPICFEYLFESTNDVSVLPCGHTIHVKCLREMEEHCQFACPLCS.

It localises to the nucleus. The catalysed reaction is S-ubiquitinyl-[E2 ubiquitin-conjugating enzyme]-L-cysteine + [acceptor protein]-L-lysine = [E2 ubiquitin-conjugating enzyme]-L-cysteine + N(6)-ubiquitinyl-[acceptor protein]-L-lysine.. Its pathway is protein modification; protein ubiquitination. Functionally, possesses transactivation activity in yeast cells. Involved in the regulation of stomatal aperture. May modulate the expression of genes that control stomata opening during heat shock or drought stress. This Oryza sativa subsp. japonica (Rice) protein is Probable E3 ubiquitin-protein ligase RZFP34.